A 399-amino-acid chain; its full sequence is Elongation factor Tu (399 aa).

The tr-type G domain maps to 10 to 204; the sequence is KPHVNIGTIG…AVDASIPEPE (195 aa). The G1 stretch occupies residues 19–26; the sequence is GHVDHGKT. Position 19-26 (19-26) interacts with GTP; that stretch reads GHVDHGKT. Mg(2+) is bound at residue threonine 26. Residues 60–64 form a G2 region; it reads GITIN. The segment at 81–84 is G3; it reads DCPG. Residues 81–85 and 136–139 contribute to the GTP site; these read DCPGH and NKCD. The G4 stretch occupies residues 136-139; sequence NKCD. Residues 174–176 are G5; sequence SGL.

This sequence belongs to the TRAFAC class translation factor GTPase superfamily. Classic translation factor GTPase family. EF-Tu/EF-1A subfamily. In terms of assembly, monomer.

Its subcellular location is the cytoplasm. The catalysed reaction is GTP + H2O = GDP + phosphate + H(+). In terms of biological role, GTP hydrolase that promotes the GTP-dependent binding of aminoacyl-tRNA to the A-site of ribosomes during protein biosynthesis. The sequence is that of Elongation factor Tu from Prochlorococcus marinus (strain NATL1A).